The following is a 1225-amino-acid chain: Hybrid signal transduction histidine kinase C (1225 aa).

Residues 8–28 traverse the membrane as a helical segment; the sequence is GFLLSTLFFTIISIILFYFFI. Positions 313–356 are enriched in low complexity; sequence LSPRSLSSSSSSSPSSSNNNGNTNNSGSLSPRSSNSNGSAVSPR. A disordered region spans residues 313 to 407; the sequence is LSPRSLSSSS…SNGTISSPRT (95 aa). Polar residues predominate over residues 357 to 368; it reads NVSSNSMSPRGQ. Positions 370–388 are enriched in low complexity; the sequence is SDRSISSPRGSSSSSSSSS. A compositionally biased stretch (polar residues) spans 389 to 407; that stretch reads NELAISPRNSNGTISSPRT. A Histidine kinase domain is found at 426–653; sequence HLSHELRTPI…TFHFVIPLET (228 aa). Histidine 429 is subject to Phosphohistidine; by autocatalysis. The region spanning 669–784 is the Response regulatory 1 domain; it reads SVLVVDKNPY…HLVACLLASM (116 aa). 4-aspartylphosphate is present on aspartate 721. Disordered regions lie at residues 809–832, 941–974, and 1021–1076; these read NNIN…SVYG, DDDS…DELN, and YLSP…PRAP. Polar residues predominate over residues 945 to 954; that stretch reads NNYCNTTGTM. Residues 1023–1037 show a composition bias toward low complexity; it reads SPRSMNNNNGNNDNG. A compositionally biased stretch (polar residues) spans 1058–1072; sequence TSDTSSLAQSPNSLS. Positions 1078 to 1200 constitute a Response regulatory 2 domain; it reads KIMILDDNPV…CLELILRKWE (123 aa). At aspartate 1127 the chain carries 4-aspartylphosphate.

Its subcellular location is the membrane. It carries out the reaction ATP + protein L-histidine = ADP + protein N-phospho-L-histidine.. Acts in a signal transduction pathway that regulates the slug versus culmination choice. Believed to be the first component of a phosphorelay that couples the sensing of ammonia to the modulation of PKA activity and hence activates culmination and spore germination. Ammonium transporters amtA and amtC are thought to respectively activate and inhibit dhkC phosphorelay. This protein probably undergoes an ATP-dependent autophosphorylation at conserved His residue in the kinase core, and a phosphoryl group is then transferred to a conserved aspartate residue in the receiver domain. This chain is Hybrid signal transduction histidine kinase C (dhkC), found in Dictyostelium discoideum (Social amoeba).